The primary structure comprises 1915 residues: Protein NLRC5 (1915 aa).

The disordered stretch occupies residues 103–137 (LGAGEESCPGPQLYHGAKRPFQSYGSSPRRKNSKK). One can recognise an NACHT domain in the interval 223–542 (RVTVLLGKAG…HTVDKDTLVE (320 aa)). 229–236 (GKAGMGKT) is an ATP binding site. LRR repeat units follow at residues 622 to 646 (VAET…SFHN), 716 to 740 (MGSL…LIQT), 744 to 771 (CSQL…LLPS), 772 to 796 (LPKL…LVKV), 871 to 898 (SPQL…AASQ), 900 to 923 (HIAQ…VLKA), 930 to 953 (LEDL…PREQ), 1006 to 1033 (THNL…LLPG), 1034 to 1055 (LGPL…VFSL), 1138 to 1161 (EVQL…LPQL), 1162 to 1184 (PQLS…LLAD), 1240 to 1263 (CNAL…CLLE), 1265 to 1292 (LPQL…LLET), 1348 to 1371 (AQQL…MLLN), 1481 to 1504 (SKLL…FSQV), 1519 to 1542 (CHHL…LLMG), 1552 to 1575 (KLHL…LSRM), 1576 to 1598 (TLLQ…CLAA), 1603 to 1626 (LPEL…CLAA), 1631 to 1654 (LPEL…CLAA), 1659 to 1682 (LPEL…CLAA), 1687 to 1711 (LPEL…LVKS), 1715 to 1738 (FEHL…ELAQ), 1741 to 1768 (PPQL…ALEQ), 1769 to 1795 (CPHI…RLPL), 1821 to 1845 (FPAL…LAQV), and 1849 to 1872 (MGQL…LLAQ).

This sequence belongs to the NLRP family. As to quaternary structure, interacts with CHUK and IKBKB; prevents CHUK and IKBKB phosphorylation and inhibits their kinase activity. Interacts with RIGI and IFIH1; blocks the interaction of MAVS to RIGI. As to expression, expressed in spleen, thymus and lung.

The protein localises to the cytoplasm. Its function is as follows. Probable regulator of the NF-kappa-B and type I interferon signaling pathways. May also regulate the type II interferon signaling pathway. Plays a role in homeostatic control of innate immunity and in antiviral defense mechanisms. The polypeptide is Protein NLRC5 (Nlrc5) (Mus musculus (Mouse)).